Reading from the N-terminus, the 226-residue chain is Molybdenum transport system permease protein ModB (226 aa).

One can recognise an ABC transmembrane type-1 domain in the interval 11–217; that stretch reads IRLTLELASL…SFLVLFALYS (207 aa). A run of 5 helical transmembrane segments spans residues 17–37, 47–67, 88–108, 150–170, and 197–217; these read LASL…WWLA, IGAV…FYLL, LPFT…PFVV, ITAA…VLMI, and AHWL…ALYS.

It belongs to the binding-protein-dependent transport system permease family. CysTW subfamily.

Its subcellular location is the cell inner membrane. Functionally, part of the binding-protein-dependent transport system for molybdenum; probably responsible for the translocation of the substrate across the membrane. The protein is Molybdenum transport system permease protein ModB (modB) of Azotobacter vinelandii.